Reading from the N-terminus, the 185-residue chain is MAEEIKNVPEQEVPKVATEESSAEVTDRGLFDFLGKKKDETKPEETPIASEFEQKVHISEPEPEVKHESLLEKLHRSDSSSSSSSEEEGSDGEKRKKKKEKKKPTTEVEVKEEEKKGFMEKLKEKLPGHKKPEDGSAVAAAPVVVPPPVEEAHPVEKKGILEKIKEKLPGYHPKTTVEEEKKDKE.

Composition is skewed to basic and acidic residues over residues 1–13, 25–45, 52–78, and 103–134; these read MAEEIKNVPEQEV, VTDRGLFDFLGKKKDETKPEE, FEQKVHISEPEPEVKHESLLEKLHRSD, and KPTTEVEVKEEEKKGFMEKLKEKLPGHKKPED. Disordered stretches follow at residues 1–138 and 166–185; these read MAEE…GSAV and EKLPGYHPKTTVEEEKKDKE. A2 is subject to N-acetylalanine. S59 carries the phosphoserine modification. Repeat copies occupy residues 112-132 and 154-174. The tract at residues 112–174 is 2 X 21 AA repeats, Lys-rich; that stretch reads EEEKKGFMEK…KEKLPGYHPK (63 aa).

It belongs to the plant dehydrin family. As to expression, in stems, cauline leaves, roots and flowers. Low levels found in maturing seeds. Absent in dry seeds.

Its function is as follows. Intrinsically disordered protein acting as a chaperone. Prevents heat-induced aggregation and/or inactivation of various substrates. Binds to acidic phospholipid vesicles without affecting membrane fluidity. The sequence is that of Dehydrin ERD14 (ERD14) from Arabidopsis thaliana (Mouse-ear cress).